We begin with the raw amino-acid sequence, 304 residues long: Ribosomal protein L11 methyltransferase (304 aa).

S-adenosyl-L-methionine-binding residues include T156, G177, D199, and N240.

This sequence belongs to the methyltransferase superfamily. PrmA family.

It localises to the cytoplasm. The catalysed reaction is L-lysyl-[protein] + 3 S-adenosyl-L-methionine = N(6),N(6),N(6)-trimethyl-L-lysyl-[protein] + 3 S-adenosyl-L-homocysteine + 3 H(+). Functionally, methylates ribosomal protein L11. The protein is Ribosomal protein L11 methyltransferase of Symbiobacterium thermophilum (strain DSM 24528 / JCM 14929 / IAM 14863 / T).